Here is a 417-residue protein sequence, read N- to C-terminus: Probable diacetyl reductase [(R)-acetoin forming] 2 (417 aa).

Residue Cys-39 coordinates Zn(2+). Ser-63 is modified (phosphoserine). Residues His-64, Cys-120, Cys-123, Cys-131, and Gln-173 each contribute to the Zn(2+) site. The segment at Gly-380–Thr-417 is disordered. Basic and acidic residues predominate over residues Glu-381–Thr-417.

This sequence belongs to the zinc-containing alcohol dehydrogenase family. Requires Zn(2+) as cofactor.

It localises to the cytoplasm. The protein resides in the nucleus. The enzyme catalyses (R)-acetoin + NAD(+) = diacetyl + NADH + H(+). Functionally, catalyzes the irreversible reduction of 2,3-butanediol to (S)-acetoin in the presence of NADH. The polypeptide is Probable diacetyl reductase [(R)-acetoin forming] 2 (BDH2) (Saccharomyces cerevisiae (strain ATCC 204508 / S288c) (Baker's yeast)).